The sequence spans 393 residues: uncharacterized protein (393 aa).

Topologically, residues 1–17 (MVSKDQTSFNKRWTLGL) are cytoplasmic. The helical transmembrane segment at 18-38 (LMLGLVIILWVLSSFLINLIF) threads the bilayer. Residues 39–46 (EDDSYRKP) are Vacuolar-facing. Residues 47 to 67 (FFITYTNTAAFIFYLFPTAKA) traverse the membrane as a helical segment. Residues 68–132 (VVVNYKDTGR…LYETIKLSAE (65 aa)) lie on the Cytoplasmic side of the membrane. Residue S93 is modified to Phosphoserine. Residues 133-153 (FCILWFTANLVTNASLAFTSV) form a helical membrane-spanning segment. Over 154-156 (ASQ) the chain is Vacuolar. Residues 157 to 176 (TILSTTSSFFTLFIGAICHV) traverse the membrane as a helical segment. Over 177–182 (ESLSKS) the chain is Cytoplasmic. The chain crosses the membrane as a helical span at residues 183–200 (KVLGSFISFVGIIMVTKS). Over 201-219 (DSHQRYQRHIADVSGDDND) the chain is Vacuolar. The chain crosses the membrane as a helical span at residues 220–240 (AVQVLIGNLLALAGAVLYGVY). The Cytoplasmic segment spans residues 241–257 (STLLKREVGDETRVNMK). A helical transmembrane segment spans residues 258-278 (IFFGFVGLFNLLFLWPSLIVL). The Vacuolar portion of the chain corresponds to 279–292 (DFFGWEPFSLPKDP). A helical transmembrane segment spans residues 293 to 313 (KVVVIIFVNCLITFVSDFCWA). Topologically, residues 314–321 (KAMLLTSP) are cytoplasmic. A helical transmembrane segment spans residues 322–342 (LTVTVGLSITIPLAMFGDVIF). Topologically, residues 343 to 345 (KHK) are vacuolar. The helical transmembrane segment at 346 to 366 (TMSALYLFGATLILGSFFIIN) threads the bilayer. The Cytoplasmic segment spans residues 367–393 (KSSEEEHFENSITASNYESVEVPAANN).

It belongs to the TPT transporter family.

The protein resides in the vacuole membrane. This is an uncharacterized protein from Saccharomyces cerevisiae (strain ATCC 204508 / S288c) (Baker's yeast).